A 159-amino-acid chain; its full sequence is SsrA-binding protein (159 aa).

It belongs to the SmpB family.

The protein resides in the cytoplasm. Functionally, required for rescue of stalled ribosomes mediated by trans-translation. Binds to transfer-messenger RNA (tmRNA), required for stable association of tmRNA with ribosomes. tmRNA and SmpB together mimic tRNA shape, replacing the anticodon stem-loop with SmpB. tmRNA is encoded by the ssrA gene; the 2 termini fold to resemble tRNA(Ala) and it encodes a 'tag peptide', a short internal open reading frame. During trans-translation Ala-aminoacylated tmRNA acts like a tRNA, entering the A-site of stalled ribosomes, displacing the stalled mRNA. The ribosome then switches to translate the ORF on the tmRNA; the nascent peptide is terminated with the 'tag peptide' encoded by the tmRNA and targeted for degradation. The ribosome is freed to recommence translation, which seems to be the essential function of trans-translation. The polypeptide is SsrA-binding protein (Mycobacteroides abscessus (strain ATCC 19977 / DSM 44196 / CCUG 20993 / CIP 104536 / JCM 13569 / NCTC 13031 / TMC 1543 / L948) (Mycobacterium abscessus)).